We begin with the raw amino-acid sequence, 368 residues long: tRNA-specific 2-thiouridylase MnmA (368 aa).

ATP-binding positions include 11 to 18 (GMSGGVDS) and Met-37. The interval 97 to 99 (NPD) is interaction with target base in tRNA. Catalysis depends on Cys-102, which acts as the Nucleophile. Cys-102 and Cys-199 form a disulfide bridge. Gly-127 contributes to the ATP binding site. An interaction with tRNA region spans residues 149-151 (KDQ). The active-site Cysteine persulfide intermediate is the Cys-199. The tract at residues 311–312 (RY) is interaction with tRNA.

It belongs to the MnmA/TRMU family. In terms of assembly, interacts with TusE.

The protein resides in the cytoplasm. It catalyses the reaction S-sulfanyl-L-cysteinyl-[protein] + uridine(34) in tRNA + AH2 + ATP = 2-thiouridine(34) in tRNA + L-cysteinyl-[protein] + A + AMP + diphosphate + H(+). Its function is as follows. Catalyzes the 2-thiolation of uridine at the wobble position (U34) of tRNA(Lys), tRNA(Glu) and tRNA(Gln), leading to the formation of s(2)U34, the first step of tRNA-mnm(5)s(2)U34 synthesis. Sulfur is provided by IscS, via a sulfur-relay system. Binds ATP and its substrate tRNAs. The chain is tRNA-specific 2-thiouridylase MnmA from Shigella flexneri serotype 5b (strain 8401).